A 578-amino-acid chain; its full sequence is Paraneoplastic antigen Ma6F (578 aa).

Disordered stretches follow at residues 106-221 and 441-578; these read AQPQ…AGAA and AAPV…PPGK. Over residues 112–129 the composition is skewed to low complexity; that stretch reads AVARGAGEAGAAGEAGSV. Positions 147–159 are enriched in gly residues; sequence GGIGEAGGVGEAG. The segment covering 160 to 173 has biased composition (low complexity); that stretch reads AAGEAGAAGEAGAA. The span at 174-211 shows a compositional bias: gly residues; that stretch reads GEAGGAGEAGGAGEAGGAGEEGGTGEEGGAGEAGGAGE. Residues 449–461 are compositionally biased toward low complexity; it reads PAAAQASPAQGDA. Composition is skewed to acidic residues over residues 462 to 473 and 556 to 566; these read SEADPGAEDADE and EESENEDEDGA.

This Homo sapiens (Human) protein is Paraneoplastic antigen Ma6F.